Here is a 123-residue protein sequence, read N- to C-terminus: RNA silencing suppressor (123 aa).

The tract at residues 52–55 is basic; it reads KRRR. Residues 62–83 form a C4-type zinc finger; the sequence is CVRCFRVNPGFYFTKRCDGITC.

Belongs to the carlaviruses nucleic acid-binding protein family.

Functionally, suppressor of viral-induced RNA silencing. The potential mechanism of action is based on sequestering siRNAs. This chain is RNA silencing suppressor, found in Populus balsamifera (Balsam poplar).